The following is a 78-amino-acid chain: Sec-independent protein translocase protein TatA (78 aa).

A helical transmembrane segment spans residues 1–21 (MGSLSIWHWIVVVAVILLLFG). Basic and acidic residues predominate over residues 43–55 (MKDDEKTAEKPEP). Residues 43–78 (MKDDEKTAEKPEPVKTINHNADGSGAARSDTGSKVI) form a disordered region.

The protein belongs to the TatA/E family. The Tat system comprises two distinct complexes: a TatABC complex, containing multiple copies of TatA, TatB and TatC subunits, and a separate TatA complex, containing only TatA subunits. Substrates initially bind to the TatABC complex, which probably triggers association of the separate TatA complex to form the active translocon.

It localises to the cell inner membrane. In terms of biological role, part of the twin-arginine translocation (Tat) system that transports large folded proteins containing a characteristic twin-arginine motif in their signal peptide across membranes. TatA could form the protein-conducting channel of the Tat system. This chain is Sec-independent protein translocase protein TatA, found in Nitrobacter winogradskyi (strain ATCC 25391 / DSM 10237 / CIP 104748 / NCIMB 11846 / Nb-255).